Here is a 399-residue protein sequence, read N- to C-terminus: Tryptophan synthase beta chain (399 aa).

N6-(pyridoxal phosphate)lysine is present on Lys92.

It belongs to the TrpB family. In terms of assembly, tetramer of two alpha and two beta chains. Requires pyridoxal 5'-phosphate as cofactor.

It catalyses the reaction (1S,2R)-1-C-(indol-3-yl)glycerol 3-phosphate + L-serine = D-glyceraldehyde 3-phosphate + L-tryptophan + H2O. The protein operates within amino-acid biosynthesis; L-tryptophan biosynthesis; L-tryptophan from chorismate: step 5/5. The beta subunit is responsible for the synthesis of L-tryptophan from indole and L-serine. The chain is Tryptophan synthase beta chain from Bordetella bronchiseptica (strain ATCC BAA-588 / NCTC 13252 / RB50) (Alcaligenes bronchisepticus).